The primary structure comprises 301 residues: Nucleosome assembly protein 1;3 (301 aa).

Positions 15–69 (VETLKNKLQALAEQHVDVLESLAPVVRKRVDVLIEIQSQHDELEAKFLEEKAALE) form a coiled coil. Residues 36–51 (LAPVVRKRVDVLIEIQ) carry the Nuclear export signal motif. Residues 278 to 301 (DEDYGASWVDDEEDDDDEYSDEEA) form a disordered region.

Belongs to the nucleosome assembly protein (NAP) family.

It is found in the nucleus. The protein localises to the cytoplasm. May modulate chromatin structure by regulation of nucleosome assembly/disassembly. This chain is Nucleosome assembly protein 1;3 (NAP1;3), found in Oryza sativa subsp. japonica (Rice).